Here is a 213-residue protein sequence, read N- to C-terminus: Guanylate kinase (213 aa).

One can recognise a Guanylate kinase-like domain in the interval 6–186 (GLLIILSSPS…TEERLKTIVS (181 aa)). 13 to 20 (SPSGAGKS) serves as a coordination point for ATP.

It belongs to the guanylate kinase family.

The protein localises to the cytoplasm. The catalysed reaction is GMP + ATP = GDP + ADP. Its function is as follows. Essential for recycling GMP and indirectly, cGMP. The polypeptide is Guanylate kinase (Ruegeria pomeroyi (strain ATCC 700808 / DSM 15171 / DSS-3) (Silicibacter pomeroyi)).